The following is a 408-amino-acid chain: ATP phosphoribosyltransferase regulatory subunit (408 aa).

The protein belongs to the class-II aminoacyl-tRNA synthetase family. HisZ subfamily. Heteromultimer composed of HisG and HisZ subunits.

It is found in the cytoplasm. It participates in amino-acid biosynthesis; L-histidine biosynthesis; L-histidine from 5-phospho-alpha-D-ribose 1-diphosphate: step 1/9. Functionally, required for the first step of histidine biosynthesis. May allow the feedback regulation of ATP phosphoribosyltransferase activity by histidine. The polypeptide is ATP phosphoribosyltransferase regulatory subunit (Gloeothece citriformis (strain PCC 7424) (Cyanothece sp. (strain PCC 7424))).